Here is a 254-residue protein sequence, read N- to C-terminus: 3-deoxy-manno-octulosonate cytidylyltransferase (254 aa).

This sequence belongs to the KdsB family.

It localises to the cytoplasm. It catalyses the reaction 3-deoxy-alpha-D-manno-oct-2-ulosonate + CTP = CMP-3-deoxy-beta-D-manno-octulosonate + diphosphate. The protein operates within nucleotide-sugar biosynthesis; CMP-3-deoxy-D-manno-octulosonate biosynthesis; CMP-3-deoxy-D-manno-octulosonate from 3-deoxy-D-manno-octulosonate and CTP: step 1/1. It functions in the pathway bacterial outer membrane biogenesis; lipopolysaccharide biosynthesis. Functionally, activates KDO (a required 8-carbon sugar) for incorporation into bacterial lipopolysaccharide in Gram-negative bacteria. The polypeptide is 3-deoxy-manno-octulosonate cytidylyltransferase (Chlamydia trachomatis serovar L2 (strain ATCC VR-902B / DSM 19102 / 434/Bu)).